The primary structure comprises 1137 residues: Receptor-type guanylate cyclase gcy-1 (1137 aa).

An N-terminal signal peptide occupies residues 1–18 (MQIFTILLLFNIFPSIFV). Residues 19 to 494 (QNLPDTTVAP…CPVSFWEQYK (476 aa)) are Extracellular-facing. N-linked (GlcNAc...) asparagine glycans are attached at residues asparagine 219, asparagine 348, asparagine 358, asparagine 384, asparagine 417, and asparagine 451. Residues 495 to 515 (ILIFVAIAVIVLMVLIMIIGC) form a helical membrane-spanning segment. The Cytoplasmic portion of the chain corresponds to 516 to 1137 (LCVISGKRAE…FKMDTLKVAN (622 aa)). One can recognise a Protein kinase domain in the interval 557–826 (LQSAPSISTG…ENICSQMKGL (270 aa)). The stretch at 840–871 (NMLEEYTSTLEEEIEERTKELTLEKKKADILL) forms a coiled coil. The region spanning 898–1028 (TVFFSDVVKF…DTVNTASRME (131 aa)) is the Guanylate cyclase domain. The interval 1086–1122 (ELRSISNRSTPPVTNDRWIPNPSSSHGSRPSSVYDPL) is disordered. Polar residues predominate over residues 1088 to 1098 (RSISNRSTPPV). The span at 1105 to 1117 (PNPSSSHGSRPSS) shows a compositional bias: low complexity.

Belongs to the adenylyl cyclase class-4/guanylyl cyclase family. As to expression, expressed predominantly in sensory neurons. Expressed asymmetrically in the right ASE (ASER) neuron and bilaterally in ASI and URX neurons. Expressed in PVT and bilaterally in AIY non-sensory neurons. Expressed in intestine.

The protein localises to the membrane. It carries out the reaction GTP = 3',5'-cyclic GMP + diphosphate. Its function is as follows. Guanylate cyclase involved in the production of the second messenger cGMP. Involved in the sensing of K+ gradient by the ASE right (ASER) sensory neuron. This is Receptor-type guanylate cyclase gcy-1 (gcy-1) from Caenorhabditis elegans.